A 91-amino-acid polypeptide reads, in one-letter code: Large ribosomal subunit protein bL31 (91 aa).

Residues 62–91 (RRKYSGTKPQQTAKGKKAAPKSTPKTNKKG) are disordered.

Belongs to the bacterial ribosomal protein bL31 family. Type A subfamily. Part of the 50S ribosomal subunit.

In terms of biological role, binds the 23S rRNA. The protein is Large ribosomal subunit protein bL31 of Thermosynechococcus vestitus (strain NIES-2133 / IAM M-273 / BP-1).